The chain runs to 429 residues: 3-phosphoshikimate 1-carboxyvinyltransferase (429 aa).

Positions 23, 24, and 28 each coordinate 3-phosphoshikimate. Lysine 23 serves as a coordination point for phosphoenolpyruvate. 2 residues coordinate phosphoenolpyruvate: glycine 95 and arginine 123. Serine 168, glutamine 170, aspartate 316, and lysine 343 together coordinate 3-phosphoshikimate. Glutamine 170 provides a ligand contact to phosphoenolpyruvate. The Proton acceptor role is filled by aspartate 316. Arginine 347 and arginine 389 together coordinate phosphoenolpyruvate.

This sequence belongs to the EPSP synthase family. In terms of assembly, monomer.

It localises to the cytoplasm. It carries out the reaction 3-phosphoshikimate + phosphoenolpyruvate = 5-O-(1-carboxyvinyl)-3-phosphoshikimate + phosphate. The protein operates within metabolic intermediate biosynthesis; chorismate biosynthesis; chorismate from D-erythrose 4-phosphate and phosphoenolpyruvate: step 6/7. Functionally, catalyzes the transfer of the enolpyruvyl moiety of phosphoenolpyruvate (PEP) to the 5-hydroxyl of shikimate-3-phosphate (S3P) to produce enolpyruvyl shikimate-3-phosphate and inorganic phosphate. In Oceanobacillus iheyensis (strain DSM 14371 / CIP 107618 / JCM 11309 / KCTC 3954 / HTE831), this protein is 3-phosphoshikimate 1-carboxyvinyltransferase.